We begin with the raw amino-acid sequence, 120 residues long: Large ribosomal subunit protein uL24 (120 aa).

Residues 1–26 (MSKQPDKQRKSQRRAPLHERHKQVRA) form a disordered region. Over residues 10-24 (KSQRRAPLHERHKQV) the composition is skewed to basic residues.

This sequence belongs to the universal ribosomal protein uL24 family. In terms of assembly, part of the 50S ribosomal subunit. Interacts weakly with protein L4.

In terms of biological role, one of two assembly initiator proteins, it binds directly to the 5'-end of the 23S rRNA, where it nucleates assembly of the 50S subunit. Stabilizes the tertiary rRNA structure within the 23S rRNA domain (domain I) to which it binds. Located at the polypeptide exit tunnel on the outside of the subunit. In Haloarcula marismortui (strain ATCC 43049 / DSM 3752 / JCM 8966 / VKM B-1809) (Halobacterium marismortui), this protein is Large ribosomal subunit protein uL24 (rpl24).